Reading from the N-terminus, the 598-residue chain is Elongation factor 4 (598 aa).

Residues 2-184 (KNIRNFSIIA…EIVAKIPAPE (183 aa)) form the tr-type G domain. Residues 14–19 (DHGKST) and 131–134 (NKID) contribute to the GTP site.

Belongs to the TRAFAC class translation factor GTPase superfamily. Classic translation factor GTPase family. LepA subfamily.

Its subcellular location is the cell inner membrane. It catalyses the reaction GTP + H2O = GDP + phosphate + H(+). Required for accurate and efficient protein synthesis under certain stress conditions. May act as a fidelity factor of the translation reaction, by catalyzing a one-codon backward translocation of tRNAs on improperly translocated ribosomes. Back-translocation proceeds from a post-translocation (POST) complex to a pre-translocation (PRE) complex, thus giving elongation factor G a second chance to translocate the tRNAs correctly. Binds to ribosomes in a GTP-dependent manner. This is Elongation factor 4 from Haemophilus influenzae (strain 86-028NP).